We begin with the raw amino-acid sequence, 167 residues long: Phosphopantetheine adenylyltransferase (167 aa).

T9 contributes to the substrate binding site. Residues T9–F10 and H17 each bind ATP. The substrate site is built by K41, L73, and R87. ATP contacts are provided by residues G88–R90, E98, and Y123–T129.

It belongs to the bacterial CoaD family. In terms of assembly, homohexamer. Mg(2+) serves as cofactor.

The protein resides in the cytoplasm. The enzyme catalyses (R)-4'-phosphopantetheine + ATP + H(+) = 3'-dephospho-CoA + diphosphate. The protein operates within cofactor biosynthesis; coenzyme A biosynthesis; CoA from (R)-pantothenate: step 4/5. Reversibly transfers an adenylyl group from ATP to 4'-phosphopantetheine, yielding dephospho-CoA (dPCoA) and pyrophosphate. The protein is Phosphopantetheine adenylyltransferase of Bordetella avium (strain 197N).